Consider the following 359-residue polypeptide: Probable mannitol dehydrogenase (359 aa).

Positions 48, 70, 101, 104, 107, 115, and 164 each coordinate Zn(2+).

It belongs to the zinc-containing alcohol dehydrogenase family. It depends on Zn(2+) as a cofactor.

It carries out the reaction D-mannitol + NAD(+) = D-mannose + NADH + H(+). Its function is as follows. Oxidizes mannitol to mannose. Provides the initial step by which translocated mannitol is committed to central metabolism and, by regulating mannitol pool size, is important in regulating salt tolerance at the cellular level. The polypeptide is Probable mannitol dehydrogenase (CAD) (Fragaria ananassa (Strawberry)).